The following is a 272-amino-acid chain: Tryptophan synthase alpha chain (272 aa).

Residues Glu60 and Asp71 each act as proton acceptor in the active site.

It belongs to the TrpA family. Tetramer of two alpha and two beta chains.

It catalyses the reaction (1S,2R)-1-C-(indol-3-yl)glycerol 3-phosphate + L-serine = D-glyceraldehyde 3-phosphate + L-tryptophan + H2O. Its pathway is amino-acid biosynthesis; L-tryptophan biosynthesis; L-tryptophan from chorismate: step 5/5. In terms of biological role, the alpha subunit is responsible for the aldol cleavage of indoleglycerol phosphate to indole and glyceraldehyde 3-phosphate. This is Tryptophan synthase alpha chain from Methanosarcina acetivorans (strain ATCC 35395 / DSM 2834 / JCM 12185 / C2A).